A 198-amino-acid polypeptide reads, in one-letter code: Probable GTP-binding protein EngB (198 aa).

The EngB-type G domain maps to 22 to 195 (DLPEIALAGR…WKAIHKFTKT (174 aa)). Residues 30–37 (GRSNVGKS), 57–61 (GKTQT), 75–78 (DVPG), 142–145 (TKAD), and 174–176 (FSS) each bind GTP. Mg(2+) contacts are provided by S37 and T59.

Belongs to the TRAFAC class TrmE-Era-EngA-EngB-Septin-like GTPase superfamily. EngB GTPase family. Mg(2+) is required as a cofactor.

Necessary for normal cell division and for the maintenance of normal septation. The sequence is that of Probable GTP-binding protein EngB from Bacillus cereus (strain B4264).